The primary structure comprises 142 residues: Nucleoside diphosphate kinase (142 aa).

ATP contacts are provided by Lys-11, Phe-59, Arg-87, Thr-93, Arg-104, and Asn-114. His-117 serves as the catalytic Pros-phosphohistidine intermediate.

Belongs to the NDK family. In terms of assembly, homotetramer. Mg(2+) is required as a cofactor.

The protein localises to the cytoplasm. It catalyses the reaction a 2'-deoxyribonucleoside 5'-diphosphate + ATP = a 2'-deoxyribonucleoside 5'-triphosphate + ADP. The enzyme catalyses a ribonucleoside 5'-diphosphate + ATP = a ribonucleoside 5'-triphosphate + ADP. Functionally, major role in the synthesis of nucleoside triphosphates other than ATP. The ATP gamma phosphate is transferred to the NDP beta phosphate via a ping-pong mechanism, using a phosphorylated active-site intermediate. The polypeptide is Nucleoside diphosphate kinase (Marinobacter nauticus (strain ATCC 700491 / DSM 11845 / VT8) (Marinobacter aquaeolei)).